The primary structure comprises 462 residues: Ubiquitin carboxyl-terminal hydrolase calypso (462 aa).

Residues 29–260 (GWLELESDPG…IRFNLMAVVP (232 aa)) form the UCH catalytic domain. Residue Cys-115 is the Nucleophile of the active site. His-197 functions as the Proton donor in the catalytic mechanism. One can recognise a ULD domain in the interval 357 to 385 (NYDKFICTFLSMLAHQGVLGELVSQHLLP). The segment at 387–462 (KKIANRLNRQ…KGRNKCRKRK (76 aa)) is positively charged C-terminal tail required for binding nucleosomes. Residues 413-447 (GTNAAGSKSQQQQQQTQQQPQQTQTAKNGKSPGKT) show a composition bias toward low complexity. The disordered stretch occupies residues 413–462 (GTNAAGSKSQQQQQQTQQQPQQTQTAKNGKSPGKTPGRRRKGRNKCRKRK). A compositionally biased stretch (basic residues) spans 448–462 (PGRRRKGRNKCRKRK).

The protein belongs to the peptidase C12 family. BAP1 subfamily. In terms of assembly, catalytic component of the polycomb repressive deubiquitinase (PR-DUB) complex, at least composed of caly/calypso, Asx and sba (MBD5/6 homolog). The PR-DUB complex associates with nucleosomes to mediate deubiquitination of histone H2AK118ub1 substrates; the association requires the positively charged C-terminal tail of caly, probably due to direct binding of DNA. Interacts (via ULD domain) with Asx (via DEUBAD domain); the interaction produces a stable heterodimer with a composite binding site for ubiquitin. Homodimerizes (via coiled-coil hinge-region between the UCH and ULD domains) to mediate assembly of 2 copies of the caly-Asx heterodimer into a bisymmetric tetramer; dimerization enhances PR-DUB association with nucleosomes.

It localises to the nucleus. The enzyme catalyses Thiol-dependent hydrolysis of ester, thioester, amide, peptide and isopeptide bonds formed by the C-terminal Gly of ubiquitin (a 76-residue protein attached to proteins as an intracellular targeting signal).. Catalytic component of the polycomb repressive deubiquitinase (PR-DUB) complex, a complex that specifically mediates deubiquitination of histone H2A monoubiquitinated at 'Lys-119' (H2AK118ub1). Mediates bisymmetric organization of the PR-DUB complex and is involved in association with nucleosomes to mediate deubiquitination. Does not deubiquitinate monoubiquitinated histone H2B. Required to maintain the transcriptionally repressive state of homeotic genes throughout development. The PR-DUB complex has weak or no activity toward 'Lys-48'- and 'Lys-63'-linked polyubiquitin chains. Polycomb group (PcG) protein. In Drosophila grimshawi (Hawaiian fruit fly), this protein is Ubiquitin carboxyl-terminal hydrolase calypso.